Here is a 109-residue protein sequence, read N- to C-terminus: Cell division protein ZapA (109 aa).

Positions 22-99 form a coiled coil; sequence EQQDALNMAA…IEQALLEQGR (78 aa).

The protein belongs to the ZapA family. Type 1 subfamily. Homodimer. Interacts with FtsZ.

Its subcellular location is the cytoplasm. Functionally, activator of cell division through the inhibition of FtsZ GTPase activity, therefore promoting FtsZ assembly into bundles of protofilaments necessary for the formation of the division Z ring. It is recruited early at mid-cell but it is not essential for cell division. The polypeptide is Cell division protein ZapA (Yersinia enterocolitica serotype O:8 / biotype 1B (strain NCTC 13174 / 8081)).